The sequence spans 397 residues: Acetyl-CoA acetyltransferase (397 aa).

The active-site Acyl-thioester intermediate is Cys95. CoA contacts are provided by Tyr187 and Lys230. Tyr187 is a K(+) binding site. Positions 246, 247, and 249 each coordinate K(+). Ser250 contributes to the CoA binding site. Val347 is a binding site for K(+). Catalysis depends on proton acceptor residues His351 and Cys379.

Belongs to the thiolase-like superfamily. Thiolase family.

It localises to the peroxisome. The enzyme catalyses 2 acetyl-CoA = acetoacetyl-CoA + CoA. Its function is as follows. Essential for n-decane utilization. The chain is Acetyl-CoA acetyltransferase (PAT1) from Yarrowia lipolytica (strain CLIB 122 / E 150) (Yeast).